Reading from the N-terminus, the 272-residue chain is Protein alcS (272 aa).

The span at 1 to 14 shows a compositional bias: polar residues; sequence MDTEQGLKNHTAKT. The segment at 1–21 is disordered; it reads MDTEQGLKNHTAKTSPHDETA. 6 helical membrane-spanning segments follow: residues 63–83, 91–111, 122–144, 164–184, 192–212, and 225–245; these read PLALGGFVITTTPLSCCLMGW, IAFTGPIIFLGGGLLVLTSIL, VVFGTIGAFWFAFGCTMTPAFNA, FLNTYAFLFIWMGVLMLIFLA, VYVAIFTTLTLVFGFLSGAYW, and LVVAAGACLFVASMLGFYLLV.

Belongs to the acetate uptake transporter (AceTr) (TC 2.A.96) family.

Its subcellular location is the cell membrane. It is found in the cell septum. In Aspergillus fumigatus (strain CBS 144.89 / FGSC A1163 / CEA10) (Neosartorya fumigata), this protein is Protein alcS.